The primary structure comprises 1073 residues: Transmembrane protein 132E (1073 aa).

An N-terminal signal peptide occupies residues 1 to 33; that stretch reads MGHFVVQGDLPWILCSLRLVIMIIAGKVSPTSS. At 34–899 the chain is on the extracellular side; it reads DALFSVPVPS…MTDLEIGMYA (866 aa). A glycan (N-linked (GlcNAc...) asparagine) is linked at N102. The tract at residues 246–270 is disordered; that stretch reads DPDSNDECGESYPRRGGPSRGESLS. Residues N324, N396, and N746 are each glycosylated (N-linked (GlcNAc...) asparagine). The helical transmembrane segment at 900-920 threads the bilayer; sequence LLGVFCLAILVFLINCIVFVL. The Cytoplasmic portion of the chain corresponds to 921 to 1073; sequence KYRHKRIPPE…DYMRRIKEIA (153 aa). Residues 952 to 970 are compositionally biased toward polar residues; sequence TQSDLSPQTVESPSNTLEG. Positions 952 to 1024 are disordered; the sequence is TQSDLSPQTV…PTSKRKRVKF (73 aa). Low complexity predominate over residues 982–994; the sequence is SGSSQTSVQSQVH.

This sequence belongs to the TMEM132 family.

It localises to the membrane. Functionally, required for normal inner ear hair cell function and hearing. The chain is Transmembrane protein 132E (tmem132e) from Danio rerio (Zebrafish).